The chain runs to 367 residues: Methylthioribose-1-phosphate isomerase (367 aa).

Residues 54 to 56 (RGA), Arg91, and Gln201 each bind substrate. Asp242 functions as the Proton donor in the catalytic mechanism. Residue 252-253 (NK) participates in substrate binding.

It belongs to the eIF-2B alpha/beta/delta subunits family. MtnA subfamily.

It catalyses the reaction 5-(methylsulfanyl)-alpha-D-ribose 1-phosphate = 5-(methylsulfanyl)-D-ribulose 1-phosphate. It participates in amino-acid biosynthesis; L-methionine biosynthesis via salvage pathway; L-methionine from S-methyl-5-thio-alpha-D-ribose 1-phosphate: step 1/6. Catalyzes the interconversion of methylthioribose-1-phosphate (MTR-1-P) into methylthioribulose-1-phosphate (MTRu-1-P). The polypeptide is Methylthioribose-1-phosphate isomerase (Acidiphilium cryptum (strain JF-5)).